The sequence spans 187 residues: Elongation factor P (187 aa).

It belongs to the elongation factor P family.

The protein localises to the cytoplasm. It participates in protein biosynthesis; polypeptide chain elongation. Functionally, involved in peptide bond synthesis. Stimulates efficient translation and peptide-bond synthesis on native or reconstituted 70S ribosomes in vitro. Probably functions indirectly by altering the affinity of the ribosome for aminoacyl-tRNA, thus increasing their reactivity as acceptors for peptidyl transferase. The sequence is that of Elongation factor P from Desulfosudis oleivorans (strain DSM 6200 / JCM 39069 / Hxd3) (Desulfococcus oleovorans).